The chain runs to 320 residues: TPR repeat-containing protein MJ0263 (320 aa).

9 TPR repeats span residues 12-45, 46-79, 80-113, 114-147, 148-181, 182-215, 216-249, 250-283, and 289-320; these read ILKD…DKDN, PLVL…EGTS, LLSL…SKPC, YLSP…YPNL, TSIL…KKDD, AHAW…NENL, VHVY…FPND, VEAK…KNVK, and KSSI…DNNI.

In Methanocaldococcus jannaschii (strain ATCC 43067 / DSM 2661 / JAL-1 / JCM 10045 / NBRC 100440) (Methanococcus jannaschii), this protein is TPR repeat-containing protein MJ0263.